A 190-amino-acid polypeptide reads, in one-letter code: C-type lectin domain family 5 member A (190 aa).

At 1 to 4 the chain is on the cytoplasmic side; the sequence is MNWH. Residues 5–25 form a helical; Signal-anchor for type II membrane protein membrane-spanning segment; it reads MIISGLIVVVIKVVGMTFFLL. Residues 26–190 lie on the Extracellular side of the membrane; it reads YFPQVFGKSN…YRWICEMNAK (165 aa). N51, N146, and N153 each carry an N-linked (GlcNAc...) asparagine glycan. The C-type lectin domain maps to 80–186; the sequence is HQGKCFFFSF…CEVSYRWICE (107 aa). 2 disulfides stabilise this stretch: C101–C185 and C163–C177.

In terms of assembly, monomer. Homodimer. The majority of CLEC5A is expressed as a monomeric form on macrophages. Interacts with TYROBP/DAP12. The interaction with TYROBP is required for CLEC5 cell surface expression. Interacts with HCST/DAP10. Forms a CLEC5A/TYROBP/HCST trimolecular complex depending almost solely on TYROBP. In terms of processing, N-glycosylated. Contains sialic acid residues. In terms of tissue distribution, strong expression in bone marrow cells and thioglycollate-induced neutrophils (at protein level). Expressed on granulocytes and monocytes from bone marrow and peripheral blood. Expressed in macrophage cell line J-774, but not in T-cell lines, B-cell lines, or mast cell lines.

The protein resides in the cell membrane. Functionally, functions as a positive regulator of osteoclastogenesis. Cell surface receptor that signals via TYROBP. Regulates inflammatory responses. In Mus musculus (Mouse), this protein is C-type lectin domain family 5 member A (Clec5a).